Here is a 432-residue protein sequence, read N- to C-terminus: tRNA modification GTPase MnmE (432 aa).

Residues Arg-23, Glu-85, and Lys-124 each contribute to the (6S)-5-formyl-5,6,7,8-tetrahydrofolate site. Positions 217-362 (GARLALIGAP…LKEAVREALL (146 aa)) constitute a TrmE-type G domain. K(+) is bound at residue Asn-227. Residues 227–232 (NAGKSS), 246–252 (SPIPGTT), and 271–274 (DTAG) each bind GTP. Ser-231 lines the Mg(2+) pocket. K(+) contacts are provided by Ser-246, Ile-248, and Thr-251. Thr-252 contacts Mg(2+). Lys-432 contributes to the (6S)-5-formyl-5,6,7,8-tetrahydrofolate binding site.

Belongs to the TRAFAC class TrmE-Era-EngA-EngB-Septin-like GTPase superfamily. TrmE GTPase family. Homodimer. Heterotetramer of two MnmE and two MnmG subunits. Requires K(+) as cofactor.

The protein resides in the cytoplasm. Functionally, exhibits a very high intrinsic GTPase hydrolysis rate. Involved in the addition of a carboxymethylaminomethyl (cmnm) group at the wobble position (U34) of certain tRNAs, forming tRNA-cmnm(5)s(2)U34. The polypeptide is tRNA modification GTPase MnmE (Thermus thermophilus (strain ATCC 27634 / DSM 579 / HB8)).